Here is a 98-residue protein sequence, read N- to C-terminus: Acylphosphatase (98 aa).

The 87-residue stretch at Ala-10–Pro-96 folds into the Acylphosphatase-like domain. Active-site residues include Arg-25 and Asn-43.

This sequence belongs to the acylphosphatase family.

The enzyme catalyses an acyl phosphate + H2O = a carboxylate + phosphate + H(+). The polypeptide is Acylphosphatase (acyP) (Azoarcus sp. (strain BH72)).